The sequence spans 288 residues: MKLPIFIADAFTVTAFHGNPAAVCLLESILQEDAHQQIAREMNLSETAFIRKLQPTDSFSQSSCFGLRWFTPVSEVPLCGHATMASAAVLFHKIKNVNSTLTFVTLSGELKARRAEDGIVLDFPLYPTFPQDFHEVKDLIKAAIGDTTVQDIQYSPDTRKLLVRLSDSYDRSFLESLKVNTEPLPGIEKTGKVKGLILTVKGESGGQTTPYDFYSRYFAPWVGVPEDPVTGSAHTVLSSYWSQQLGKKEMRAFQCSCRGGELDISLRPDGRVDMKGGAAVVLEGMLTA.

Glu46 is an active-site residue.

The protein belongs to the PhzF family. Interacts with UNRIP/MAWD.

The polypeptide is Phenazine biosynthesis-like domain-containing protein (Pbld) (Rattus norvegicus (Rat)).